An 880-amino-acid chain; its full sequence is MLLIHIRSTRKILALGRHVFPSNAFFSVSSRPSLSSSDEVAAHDVASLLKTPNWEKNSSLKSLVSHMNPNVASQVISLQRSDNDICVRFFMWVCKHSSYCFDPTQKNQLLKLIVSSGLYRVAHAVIVALIKECSRCEKEMLKLMYCFDELREVFGFRLNYPCYSSLLMSLAKLDLGFLAYVTYRRMEADGFVVGMIDYRTIVNALCKNGYTEAAEMFMSKILKIGFVLDSHIGTSLLLGFCRGLNLRDALKVFDVMSKEVTCAPNSVSYSILIHGLCEVGRLEEAFGLKDQMGEKGCQPSTRTYTVLIKALCDRGLIDKAFNLFDEMIPRGCKPNVHTYTVLIDGLCRDGKIEEANGVCRKMVKDRIFPSVITYNALINGYCKDGRVVPAFELLTVMEKRACKPNVRTFNELMEGLCRVGKPYKAVHLLKRMLDNGLSPDIVSYNVLIDGLCREGHMNTAYKLLSSMNCFDIEPDCLTFTAIINAFCKQGKADVASAFLGLMLRKGISLDEVTGTTLIDGVCKVGKTRDALFILETLVKMRILTTPHSLNVILDMLSKGCKVKEELAMLGKINKLGLVPSVVTYTTLVDGLIRSGDITGSFRILELMKLSGCLPNVYPYTIIINGLCQFGRVEEAEKLLSAMQDSGVSPNHVTYTVMVKGYVNNGKLDRALETVRAMVERGYELNDRIYSSLLQGFVLSQKGIDNSEESTVSDIALRETDPECINELISVVEQLGGCISGLCIFLVTRLCKEGRTDESNDLVQNVLERGVFLEKAMDIIMESYCSKKKHTKCMELITLVLKSGFVPSFKSFCLVIQGLKKEGDAERARELVMELLTSNGVVEKSGVLTYVECLMEGDETGDCSEVIDLVDQLHCRERPTF.

The transit peptide at 1-89 (MLLIHIRSTR…RSDNDICVRF (89 aa)) directs the protein to the mitochondrion. 19 PPR repeats span residues 159-193 (NYPC…GFVV), 194-228 (GMID…GFVL), 229-259 (DSHI…MSKE), 265-299 (NSVS…GCQP), 300-334 (STRT…GCKP), 335-369 (NVHT…RIFP), 370-404 (SVIT…ACKP), 405-439 (NVRT…GLSP), 440-474 (DIVS…DIEP), 475-509 (DCLT…GISL), 510-544 (DEVT…RILT), 545-579 (TPHS…GLVP), 580-614 (SVVT…GCLP), 615-649 (NVYP…GVSP), 650-684 (NHVT…GYEL), 685-721 (NDRI…ETDP), 738-768 (ISGL…VLER), 772-806 (LEKA…GFVP), and 807-842 (SFKS…GVVE).

This sequence belongs to the PPR family. P subfamily.

The protein localises to the mitochondrion. The chain is Pentatricopeptide repeat-containing protein At3g07290, mitochondrial from Arabidopsis thaliana (Mouse-ear cress).